The primary structure comprises 941 residues: Pre-mRNA-processing factor 6 (941 aa).

The tract at residues 1–79 (MNKKKKPFLG…DEDLNDTNYD (79 aa)) is disordered. The span at 39-65 (DANDPVDDRHAPPGKRTVGDQMKKNQA) shows a compositional bias: basic and acidic residues. A compositionally biased stretch (acidic residues) spans 66 to 78 (ADDDDEDLNDTNY). Position 143 is a phosphoserine (Ser143). Phosphothreonine occurs at positions 180, 266, and 275. At Ser279 the chain carries Phosphoserine. HAT repeat units lie at residues 384-416 (TDIRAKKRVLRKALEHVPNSVRLWKAAVELEEP), 418-444 (DARIMLSRAVECCPTSVELWLALARLE), 445-476 (TYENARKVLNKARENIPTDRHIWITAAKLEEA), 554-586 (NALECARAIYAYALQVFPSKKSVWLRAAYFEKN), 588-620 (GTRESLEALLQRAVAHCPKAEVLWLMGAKSKWL), 622-654 (GDVPAARSILALAFQANPNSEEIWLAAVKLESE), 689-721 (GNISAAQELCEEALRHYEDFPKLWMMKGQIEEQ), 723-755 (ELMEKAREAYNQGLKKCPHSTPLWLLLSRLEEK), and 855-887 (RKITKAREWFHRTVKIDSDLGDAWAFFYKFELQ).

In terms of assembly, identified in the spliceosome B complex. Identified in the spliceosome C complex. Associates with the U5 snRNP particle. Component of the U4/U6-U5 tri-snRNP complex composed of the U4, U6 and U5 snRNAs and at least PRPF3, PRPF4, PRPF6, PRPF8, PRPF31, SNRNP200, TXNL4A, SNRNP40, DDX23, CD2BP2, PPIH, SNU13, EFTUD2, SART1 and USP39, LSm proteins LSm2-8 and Sm proteins. Interacts with ARAF1. Interacts with AR and NR3C1, but not ESR1, independently of the presence of hormones. Interacts with USH1G. Post-translationally, phosphorylated by PRP4K during spliceosome assembly.

Its subcellular location is the nucleus. The protein resides in the nucleoplasm. The protein localises to the nucleus speckle. In terms of biological role, involved in pre-mRNA splicing as component of the U4/U6-U5 tri-snRNP complex, one of the building blocks of the spliceosome. Enhances dihydrotestosterone-induced transactivation activity of AR, as well as dexamethasone-induced transactivation activity of NR3C1, but does not affect estrogen-induced transactivation. The sequence is that of Pre-mRNA-processing factor 6 (Prpf6) from Mus musculus (Mouse).